The primary structure comprises 207 residues: Large ribosomal subunit protein bL9 (207 aa).

The segment covering 162–176 (QKKEEKAKDEVSATE) has biased composition (basic and acidic residues). Residues 162–207 (QKKEEKAKDEVSATEKDEELMLSSVTNDNDGDGAKEIVVEGTEESQ) form a disordered region.

The protein belongs to the bacterial ribosomal protein bL9 family.

In terms of biological role, binds to the 23S rRNA. The polypeptide is Large ribosomal subunit protein bL9 (Ehrlichia ruminantium (strain Gardel)).